The following is a 321-amino-acid chain: Basic endochitinase A (321 aa).

An N-terminal signal peptide occupies residues 1–19 (MGAFALFAVLAMAVTMAVA). Residues 20–60 (EQCGSQAGGATCPNCLCCSRFGWCGSTSDYCGDGCQSQCAG) form the Chitin-binding type-1 domain. Disulfide bonds link cysteine 22/cysteine 37, cysteine 31/cysteine 43, cysteine 34/cysteine 61, cysteine 36/cysteine 50, and cysteine 54/cysteine 58. Residues 62–79 (GGGGTPVTPTPTPSGGGG) are hinge region (Gly/Pro/Thr-rich). The catalytic stretch occupies residues 80 to 321 (VSSIVSRALF…LDCYNQRPFA (242 aa)). Disulfide bonds link cysteine 101/cysteine 163, cysteine 175/cysteine 183, and cysteine 301/cysteine 314. The Proton donor role is filled by glutamate 145.

The protein belongs to the glycosyl hydrolase 19 family. Chitinase class I subfamily. As to expression, localized in the aleurone cells of the seed endosperm (at protein level).

The enzyme catalyses Random endo-hydrolysis of N-acetyl-beta-D-glucosaminide (1-&gt;4)-beta-linkages in chitin and chitodextrins.. Its function is as follows. Defense against chitin-containing fungal pathogens. Binds the hyphal tips, lateral walls and septa of fungi and degrades mature chitin. In Secale cereale (Rye), this protein is Basic endochitinase A.